Reading from the N-terminus, the 170-residue chain is Protein-export protein SecB (170 aa).

The protein belongs to the SecB family. Homotetramer, a dimer of dimers. One homotetramer interacts with 1 SecA dimer.

The protein localises to the cytoplasm. Functionally, one of the proteins required for the normal export of preproteins out of the cell cytoplasm. It is a molecular chaperone that binds to a subset of precursor proteins, maintaining them in a translocation-competent state. It also specifically binds to its receptor SecA. The sequence is that of Protein-export protein SecB from Xanthomonas campestris pv. campestris (strain 8004).